The sequence spans 469 residues: Mitochondrial adenyl nucleotide antiporter SLC25A25 (469 aa).

The segment at 1–165 is regulatory N-terminal domain; sequence MLCLCLYVPI…LYWKHSTIFD (165 aa). Over 1–189 the chain is Mitochondrial intermembrane; sequence MLCLCLYVPI…ERQTGMWWRH (189 aa). 3 consecutive EF-hand domains span residues 47 to 80, 78 to 113, and 114 to 149; these read TYRQ…QDHE, DHEK…LGVK, and ISEQ…HPVE. Residues D60, D62, D64, Q66, and E71 each contribute to the Ca(2+) site. The tract at residues 151-160 is linker region; that stretch reads IPEIILYWKH. The segment at 166–469 is C-terminal transmembrane transporter domain; sequence VGENLTVPDE…LKITLGVQSR (304 aa). Solcar repeat units follow at residues 184–270, 278–363, and 375–463; these read GMWW…MKRL, LRIH…LKNT, and PGVF…LKIT. A helical membrane pass occupies residues 190-207; that stretch reads LVAGGGAGAVSRTCTAPL. Topologically, residues 208-244 are mitochondrial matrix; it reads DRLKVLMQVHASRSNNMCIIGGFTQMIREGGAKSLWR. Residues 245–264 form a helical membrane-spanning segment; sequence GNGINVLKIAPESAIKFMAY. The Mitochondrial intermembrane portion of the chain corresponds to 265–287; the sequence is EQMKRLVGSDQETLRIHERLVAG. Residues 288–301 traverse the membrane as a helical segment; the sequence is SLAGAIAQSSIYPM. Over 302 to 337 the chain is Mitochondrial matrix; that stretch reads EVLKTRMALRKTGQYSGMLDCAKRILAKEGVAAFYK. The chain crosses the membrane as a helical span at residues 338-357; that stretch reads GYIPNMLGIIPYAGIDLAVY. Topologically, residues 358-380 are mitochondrial intermembrane; it reads ETLKNTWLQRYAVNSADPGVFVL. Residues 381-398 form a helical membrane-spanning segment; sequence LACGTISSTCGQLASYPL. The Mitochondrial matrix portion of the chain corresponds to 399 to 437; sequence ALVRTRMQAQASIEGAPEVTMSSLFKQILRTEGAFGLYR. A helical transmembrane segment spans residues 438-457; that stretch reads GLAPNFMKVIPAVSISYVVY. At 458-469 the chain is on the mitochondrial intermembrane side; that stretch reads ENLKITLGVQSR.

Belongs to the mitochondrial carrier (TC 2.A.29) family. In terms of tissue distribution, mainly present in the liver and the skeletal muscle (at protein level).

Its subcellular location is the mitochondrion inner membrane. It catalyses the reaction Mg(2+)(out) + phosphate(in) + ATP(out) = Mg(2+)(in) + phosphate(out) + ATP(in). With respect to regulation, activated by an increase in cytosolic calcium levels that induce a conformational change of the N-terminal regulatory domain, uncapping the channel and allowing transport. Its function is as follows. Electroneutral antiporter that most probably mediates the transport of adenyl nucleotides through the inner mitochondrial membrane. Originally identified as an ATP-magnesium/inorganic phosphate antiporter, it could have a broader specificity for adenyl nucleotides. By regulating the mitochondrial matrix adenyl nucleotide pool could adapt to changing cellular energetic demands and indirectly regulate adenyl nucleotide-dependent metabolic pathways. This is Mitochondrial adenyl nucleotide antiporter SLC25A25 from Rattus norvegicus (Rat).